A 99-amino-acid polypeptide reads, in one-letter code: MVERLSAEARTDALRKLSGWSELDGRDAISRSFTFRDFNEAFGFMTRVALVAEKRDHHPEWRNVYRTVDVVLSTHDAGGVTLLDVELAEAMDAIAASMA.

The protein belongs to the pterin-4-alpha-carbinolamine dehydratase family.

The enzyme catalyses (4aS,6R)-4a-hydroxy-L-erythro-5,6,7,8-tetrahydrobiopterin = (6R)-L-erythro-6,7-dihydrobiopterin + H2O. The sequence is that of Putative pterin-4-alpha-carbinolamine dehydratase from Bradyrhizobium sp. (strain BTAi1 / ATCC BAA-1182).